A 163-amino-acid chain; its full sequence is Nucleotide-binding protein RER_17110 (163 aa).

This sequence belongs to the YajQ family.

Nucleotide-binding protein. The sequence is that of Nucleotide-binding protein RER_17110 from Rhodococcus erythropolis (strain PR4 / NBRC 100887).